Reading from the N-terminus, the 696-residue chain is Zinc finger SWIM domain-containing protein 3 (696 aa).

The SWIM-type zinc finger occupies 531–572; sequence VDVQLLEDSHQVSKDGCSCSCSFQQWYHLPCRHILALLHTSQ.

The chain is Zinc finger SWIM domain-containing protein 3 (ZSWIM3) from Homo sapiens (Human).